The chain runs to 557 residues: Cytochrome P450 monooxygenase FSL4 (557 aa).

2 consecutive transmembrane segments (helical) span residues 6 to 26 (LWLVTVTATLSLFVWQLIFLL) and 32 to 52 (IVVCLIAESLFFVAWFFYWTV). N-linked (GlcNAc...) asparagine glycans are attached at residues N127 and N393. C494 contacts heme.

This sequence belongs to the cytochrome P450 family. It depends on heme as a cofactor.

It is found in the membrane. It functions in the pathway secondary metabolite biosynthesis. Functionally, cytochrome P450 monooxygenase; part of the gene cluster that mediates the biosynthesis of fusarielins F, G and H, decaketide compounds with 5 methylations and a decaline core that act as mycoestrogens as they stimulate growth of MCF-7 breast cancer cells. The initial compound in the pathway is produced by the reducing polyketide synthase FSL1. FSL1 lacks an active enoyl reductase (ER) domain and biosynthesis of fusarielins relies on the trans-acting enoyl reductase FSL5, before it is released through hydrolysis catalyzed by the thioesterase FSL2. Fusarielins F, G, and H have a C11=C12 cis double bond and is fully reduced between C10 and C11 and between C12 and C13. FSL3 can be involved in the formation of the C11=C12 cis double bond by moving a hypothetical C10=C11 or C12=C13 trans double bond to form prefusarielin. Prefusarielin is oxygenated at C15 and C16 by FSL4, resulting in fusarielin F, which subsequently is epoxidized into fusarielin G by the same enzyme. The final step in the pathway is a reduction of the carboxylic acid moiety to yield fusarielin H via a still undetermined mechanism. The chain is Cytochrome P450 monooxygenase FSL4 from Gibberella zeae (strain ATCC MYA-4620 / CBS 123657 / FGSC 9075 / NRRL 31084 / PH-1) (Wheat head blight fungus).